We begin with the raw amino-acid sequence, 913 residues long: MTKFQEMVTFKDVAVVFTEEELGLLDSVQRKLYRDVMLENFRNLLLVAHQPFKPDLISQLEREEKLLMVETETPRDGCSGRKNQQKMESIQEVTVSYFSPKELSSRQTWQQSAGGLIRCQDFLKVFQGKNSQLQEQGNSLGQVWAGIPVQISEDKNYIFTHIGNGSNYIKSQGYPSWRAHHSWRKMYLKESHNYQCRCQQISMKNHFCKCDSVSWLSHHNDKLEVHRKENYSCHDCGEDIMKVSLLNQESIQTEEKPYPCTGYRKAFSNDSSSEVHQQFHLEGKPYTYSSCGKGCNYSSLLHIHQNIEREDDIENSHLKSYQRVHTEEKPCKCGEYGENFNHCSPLNTYELIHTGEMSYRHNIYEKAFSHSLDLNSIFRVHTRDEPHEYEENENVFNQSSCLQVHQKIHTEEKLYTDIEYGKSFICSSNLDIQHRVHMEENSYNSEECGNGFSLASHFQDLQIVHTKEQPYKRYVCSNSFSHNLYLQGHPKIHIGEKPRKEHGNGFNWSSKLKDHQRVHTGQKPYKCNICGKGFNHRSVLNVHQRVHTGEKPYKCEECDKGFSRSSYLQAHQRVHTGEKPYKCEECGKGFSRNSYLQGHQRVHTGEKPYKCEECGKGFSRSSHLQGHQRVHTGEKPFKCEECGKGFSWSFNLQIHQRVHTGEKPYKCEECGKGFSKASTLLAHQRVHTGEKPYQCDECGKSFSQRSYLQSHQSVHSGERPYICEVCGKGFSQRAYLQGHQRVHTRVKPYKCEMCGKGFSQSSRLEAHRRVHTGGKPYKCEVCTKGFSESSRLQAHQRVHVEGRPYKCEQCGKGFSGYSSLQAHHRVHTGEKPYKCEVCGKGFSQRSNLQAHQRVHTGEKPYKCDACGKGFRWSSGLLIHQRVHSSDKFYKSEDYGKDYPSSENLHRNEDSVLF.

A KRAB domain is found at 8–79; sequence VTFKDVAVVF…ETETPRDGCS (72 aa). K256 participates in a covalent cross-link: Glycyl lysine isopeptide (Lys-Gly) (interchain with G-Cter in SUMO2). Residues 258–280 form a C2H2-type 1; degenerate zinc finger; sequence YPCTGYRKAFSNDSSSEVHQQFH. The segment at 443–465 adopts a C2H2-type 2; degenerate zinc-finger fold; the sequence is YNSEECGNGFSLASHFQDLQIVH. A C2H2-type 3; degenerate zinc finger spans residues 471-493; that stretch reads YKRYVCSNSFSHNLYLQGHPKIH. A C2H2-type 4; degenerate zinc finger spans residues 497 to 519; that stretch reads KPRKEHGNGFNWSSKLKDHQRVH. 13 C2H2-type zinc fingers span residues 525–547, 553–575, 581–603, 609–631, 637–659, 665–687, 693–715, 721–743, 749–771, 777–799, 805–827, 833–855, and 861–883; these read YKCN…QRVH, YKCE…QRVH, FKCE…QRVH, YQCD…QSVH, YICE…QRVH, YKCE…RRVH, YKCE…HRVH, and YKCD…QRVH. K890 participates in a covalent cross-link: Glycyl lysine isopeptide (Lys-Gly) (interchain with G-Cter in SUMO2).

It belongs to the krueppel C2H2-type zinc-finger protein family.

It localises to the nucleus. Its function is as follows. May be involved in transcriptional regulation. This Homo sapiens (Human) protein is Zinc finger protein 112 (ZNF112).